The chain runs to 97 residues: Conotoxin Cal6.1a (97 aa).

The N-terminal stretch at 1-22 is a signal peptide; sequence MKLTTVLVVALLVLAACQFTVT. Residues 23-46 are disordered; sequence DNSGDDPENPSLRSVGENQNPDST. Positions 23-68 are excised as a propeptide; sequence DNSGDDPENPSLRSVGENQNPDSTKTITAWATRDMTNMRRGLNRPS. 3 disulfide bridges follow: C71-C87, C78-C91, and C86-C96.

The protein belongs to the conotoxin O1 superfamily. In terms of tissue distribution, expressed by the venom duct.

The protein localises to the secreted. In terms of biological role, probable neurotoxin with unknown target. Possibly targets ion channels. The polypeptide is Conotoxin Cal6.1a (Californiconus californicus (California cone)).